The following is a 288-amino-acid chain: 2-hydroxy-6-oxononadienedioate/2-hydroxy-6-oxononatrienedioate hydrolase (288 aa).

Residue His267 is the Proton acceptor of the active site.

It belongs to the AB hydrolase superfamily. MhpC family. As to quaternary structure, homodimer.

It carries out the reaction (2Z,4E)-2-hydroxy-6-oxonona-2,4-dienedioate + H2O = (2Z)-2-hydroxypenta-2,4-dienoate + succinate + H(+). The catalysed reaction is (2Z,4E,7E)-2-hydroxy-6-oxonona-2,4,7-trienedioate + H2O = (2Z)-2-hydroxypenta-2,4-dienoate + fumarate + H(+). It functions in the pathway aromatic compound metabolism; 3-phenylpropanoate degradation. In terms of biological role, catalyzes the cleavage of the C5-C6 bond of 2-hydroxy-6-oxononadienedioate and 2-hydroxy-6-oxononatrienedioate, a dienol ring fission product of the bacterial meta-cleavage pathway for degradation of phenylpropionic acid. This is 2-hydroxy-6-oxononadienedioate/2-hydroxy-6-oxononatrienedioate hydrolase from Escherichia coli O81 (strain ED1a).